Consider the following 213-residue polypeptide: MPEENIFLFVPNLIGYARIVFAIISFYFMPCCPFTASSFYLLSGLLDAFDGHAARALNQGTRFGAMLDMLTDRCATMCLLVNLALLYPRATLLFQLSMSLDVASHWLHLHSSVVRGSESHKMIDLSGNPVLRIYYTSRPALFTLCAGNELFYCLLYLFNFSEGPLVGSVGLFRMGLWITAPIALLKSIISVIHLVTAARNMAALDAADRAKKK.

The Cytoplasmic segment spans residues 1 to 5; it reads MPEEN. Residues 6–26 form a helical membrane-spanning segment; the sequence is IFLFVPNLIGYARIVFAIISF. Tyrosine 27 is a topological domain (lumenal). A helical membrane pass occupies residues 28–48; sequence FMPCCPFTASSFYLLSGLLDA. Mg(2+) is bound by residues aspartate 47 and aspartate 50. At 49 to 73 the chain is on the cytoplasmic side; the sequence is FDGHAARALNQGTRFGAMLDMLTDR. The a CDP-1,2-diacyl-sn-glycerol site is built by glycine 51, arginine 55, and threonine 61. Aspartate 68 and aspartate 72 together coordinate Mg(2+). Residue aspartate 72 is the Proton acceptor of the active site. The chain crosses the membrane as a helical span at residues 74–94; that stretch reads CATMCLLVNLALLYPRATLLF. A topological domain (lumenal) is located at residue glutamine 95. The chain crosses the membrane as a helical span at residues 96–116; it reads LSMSLDVASHWLHLHSSVVRG. Over 117 to 139 the chain is Cytoplasmic; it reads SESHKMIDLSGNPVLRIYYTSRP. The helical transmembrane segment at 140 to 160 threads the bilayer; it reads ALFTLCAGNELFYCLLYLFNF. At 161–174 the chain is on the lumenal side; it reads SEGPLVGSVGLFRM. Residues 175–195 traverse the membrane as a helical segment; that stretch reads GLWITAPIALLKSIISVIHLV. Topologically, residues 196–213 are cytoplasmic; sequence TAARNMAALDAADRAKKK.

This sequence belongs to the CDP-alcohol phosphatidyltransferase class-I family. The cofactor is Mn(2+). Mg(2+) serves as cofactor. Detected in liver (at protein level). Widely expressed. Highly expressed in the brain and kidney; lower levels in heart, spleen, lung, liver, skeletal muscle and testis.

The protein resides in the endoplasmic reticulum membrane. It is found in the cell membrane. The enzyme catalyses a CDP-1,2-diacyl-sn-glycerol + myo-inositol = a 1,2-diacyl-sn-glycero-3-phospho-(1D-myo-inositol) + CMP + H(+). Functionally, catalyzes the biosynthesis of phosphatidylinositol (PtdIns) as well as PtdIns:inositol exchange reaction. May thus act to reduce an excessive cellular PtdIns content. The exchange activity is due to the reverse reaction of PtdIns synthase and is dependent on CMP, which is tightly bound to the enzyme. This chain is CDP-diacylglycerol--inositol 3-phosphatidyltransferase, found in Rattus norvegicus (Rat).